The sequence spans 119 residues: Myohemerythrin-1 (119 aa).

His-25, His-55, Asn-58, Glu-59, His-74, His-78, His-107, and Asp-112 together coordinate Fe cation.

It belongs to the hemerythrin family. As to quaternary structure, monomer. Muscle.

In terms of biological role, myohemerythrin is an oxygen-binding protein found in the retractor muscles of certain worms. The oxygen-binding site contains two iron atoms. The polypeptide is Myohemerythrin-1 (Phascolopsis gouldii (Peanut worm)).